Here is a 184-residue protein sequence, read N- to C-terminus: Elongation factor P (184 aa).

Belongs to the elongation factor P family.

The protein resides in the cytoplasm. Its pathway is protein biosynthesis; polypeptide chain elongation. Its function is as follows. Involved in peptide bond synthesis. Stimulates efficient translation and peptide-bond synthesis on native or reconstituted 70S ribosomes in vitro. Probably functions indirectly by altering the affinity of the ribosome for aminoacyl-tRNA, thus increasing their reactivity as acceptors for peptidyl transferase. This is Elongation factor P from Thermus thermophilus (strain ATCC BAA-163 / DSM 7039 / HB27).